Here is a 340-residue protein sequence, read N- to C-terminus: MLYPLIRKGIFALEPENAHDLAIKMLHLAGNPILNKLLKALLACPSGNEKTVMGIKFKNPIGLAAGADKNGDAIDGFGAMGFGFIEVGTVTPLAQDGNAKPRQFRIVEAEGIVNRNGFNNYGVDYLVENVKKAKFDGVIGINIGKNKVTPVERGKDDYIFCLNKAYNYAGYITVNISSPNTPGLRQLQYGDALDDLLKSIKERQAYLAQVYNKYVPIAVKIAPDQTEEELVQIADTLRRHKMDGVIATNTTISRDTVAGMKNADQTGGLSGKPLQHKSTEIIRRLQQELKGEIPIIGSGGIDGVQNAQEKIVAGAELLQVYSGLIYHGPGLVKALVEAIR.

FMN-binding positions include 65–69 (AGADK) and threonine 89. Lysine 69 contacts substrate. Substrate is bound at residue 114–118 (NRNGF). FMN is bound by residues asparagine 142 and asparagine 175. Asparagine 175 lines the substrate pocket. The active-site Nucleophile is serine 178. Substrate is bound at residue asparagine 180. FMN contacts are provided by lysine 220 and threonine 248. Residue 249 to 250 (NT) participates in substrate binding. FMN is bound by residues glycine 271, glycine 300, and 321–322 (YS).

This sequence belongs to the dihydroorotate dehydrogenase family. Type 2 subfamily. As to quaternary structure, monomer. The cofactor is FMN.

It localises to the cell membrane. It catalyses the reaction (S)-dihydroorotate + a quinone = orotate + a quinol. The protein operates within pyrimidine metabolism; UMP biosynthesis via de novo pathway; orotate from (S)-dihydroorotate (quinone route): step 1/1. Catalyzes the conversion of dihydroorotate to orotate with quinone as electron acceptor. The sequence is that of Dihydroorotate dehydrogenase (quinone) from Mannheimia succiniciproducens (strain KCTC 0769BP / MBEL55E).